The chain runs to 765 residues: E3 ubiquitin-protein ligase SMURF2 (765 aa).

Residues 1 to 117 (MSNQGVRRNG…KDTGYQRLDL (117 aa)) enclose the C2 domain. 3 consecutive WW domains span residues 157 to 190 (NDLP…RPTR), 251 to 284 (PDLP…DPRV), and 297 to 330 (GPLP…DPRL). The tract at residues 341–375 (SPNGSRAAVEAQSSSRPGQLKEQAQSVVSPGNLPE) is disordered. The span at 351–369 (AQSSSRPGQLKEQAQSVVS) shows a compositional bias: polar residues. The region spanning 431–765 (RPKDLWKRLM…IEETCGFAVE (335 aa)) is the HECT domain. The active-site Glycyl thioester intermediate is the Cys-733.

Its subcellular location is the nucleus. It is found in the cytoplasm. The protein resides in the cell membrane. The protein localises to the membrane raft. It catalyses the reaction S-ubiquitinyl-[E2 ubiquitin-conjugating enzyme]-L-cysteine + [acceptor protein]-L-lysine = [E2 ubiquitin-conjugating enzyme]-L-cysteine + N(6)-ubiquitinyl-[acceptor protein]-L-lysine.. The protein operates within protein modification; protein ubiquitination. Functionally, E3 ubiquitin-protein ligase which accepts ubiquitin from an E2 ubiquitin-conjugating enzyme in the form of a thioester and then directly transfers the ubiquitin to targeted substrates. In Danio rerio (Zebrafish), this protein is E3 ubiquitin-protein ligase SMURF2 (smurf2).